Reading from the N-terminus, the 268-residue chain is Undecaprenyl-diphosphatase (268 aa).

7 helical membrane passes run 41–61, 89–109, 114–134, 155–175, 191–211, 218–238, and 248–268; these read PGPS…VCYF, IFIG…FVPY, IFRS…LMYI, LIGL…GVTI, FSFL…FISS, FSFF…LLAI, and NGLK…LLNL.

Belongs to the UppP family.

It is found in the cell inner membrane. The catalysed reaction is di-trans,octa-cis-undecaprenyl diphosphate + H2O = di-trans,octa-cis-undecaprenyl phosphate + phosphate + H(+). Its function is as follows. Catalyzes the dephosphorylation of undecaprenyl diphosphate (UPP). Confers resistance to bacitracin. In Prochlorococcus marinus (strain MIT 9312), this protein is Undecaprenyl-diphosphatase.